A 205-amino-acid polypeptide reads, in one-letter code: Peptidyl-tRNA hydrolase (205 aa).

Tyr-17 contributes to the tRNA binding site. Residue His-22 is the Proton acceptor of the active site. The tRNA site is built by Tyr-73 and Asn-75.

This sequence belongs to the PTH family. In terms of assembly, monomer.

Its subcellular location is the cytoplasm. The enzyme catalyses an N-acyl-L-alpha-aminoacyl-tRNA + H2O = an N-acyl-L-amino acid + a tRNA + H(+). Its function is as follows. Hydrolyzes ribosome-free peptidyl-tRNAs (with 1 or more amino acids incorporated), which drop off the ribosome during protein synthesis, or as a result of ribosome stalling. Functionally, catalyzes the release of premature peptidyl moieties from peptidyl-tRNA molecules trapped in stalled 50S ribosomal subunits, and thus maintains levels of free tRNAs and 50S ribosomes. The sequence is that of Peptidyl-tRNA hydrolase from Maridesulfovibrio salexigens (strain ATCC 14822 / DSM 2638 / NCIMB 8403 / VKM B-1763) (Desulfovibrio salexigens).